The sequence spans 151 residues: Calcium-binding protein SPEC 2C (151 aa).

EF-hand domains lie at 10–45, 46–78, 81–116, and 118–151; these read EQRK…IEIE, LTQE…KAEQ, GKGA…CTDP, and MTKE…QSSY. D23, D25, D27, K29, E34, D59, D61, S63, E70, D94, D96, S98, S100, E105, D131, D135, E137, and E142 together coordinate Ca(2+).

In terms of tissue distribution, found in cell lineages giving rise to the aboral ectoderm, a squamous epithelium covering the surface of the late stage embryo and larva.

Its function is as follows. Calcium-binding protein involved in larval development and metamorphosis. Likely to function as calcium buffers mediating the transport of calcium from the sea water to the blastocoel where calcium is required for skeleton formation. This Strongylocentrotus purpuratus (Purple sea urchin) protein is Calcium-binding protein SPEC 2C (SPEC2C).